The sequence spans 198 residues: Superoxide dismutase [Fe] (198 aa).

Residues His-27, His-74, Asp-158, and His-162 each contribute to the Fe cation site.

Belongs to the iron/manganese superoxide dismutase family. Homodimer. Fe cation serves as cofactor.

It localises to the cytoplasm. It catalyses the reaction 2 superoxide + 2 H(+) = H2O2 + O2. In terms of biological role, destroys superoxide anion radicals which are normally produced within the cells and which are toxic to biological systems. This Plasmodium falciparum (isolate HB3) protein is Superoxide dismutase [Fe] (SODB).